The chain runs to 881 residues: Phosphoinositide 3-kinase regulatory subunit 5 (881 aa).

Positions 23–99 (SRDAVSSRWA…APHIPPDSEL (77 aa)) are heterodimerization. 2 disordered regions span residues 312-339 (PVASENEEDEEEEEEDVETDGCSPERDS) and 472-499 (PQAKPRIPARSRRAHSLPQHGLGQKLQT). Acidic residues predominate over residues 316 to 330 (ENEEDEEEEEEDVET). The segment at 657 to 757 (PILADMILYY…WNDVEKVCTS (101 aa)) is interaction with G beta gamma proteins.

In terms of assembly, heterodimer. Interacts with a catalytic subunit and with G beta gamma proteins.

The protein resides in the nucleus. It localises to the cytoplasm. It is found in the cell membrane. With respect to regulation, greatly activated by G gamma proteins. Its function is as follows. Regulatory subunit of the PI3K gamma complex. This chain is Phosphoinositide 3-kinase regulatory subunit 5 (PIK3R5), found in Gallus gallus (Chicken).